Here is a 143-residue protein sequence, read N- to C-terminus: Transcriptional regulator MraZ (143 aa).

2 consecutive SpoVT-AbrB domains span residues 5 to 47 (EYHH…PMQG) and 76 to 119 (ATEC…SRSR).

It belongs to the MraZ family. In terms of assembly, forms oligomers.

It localises to the cytoplasm. Its subcellular location is the nucleoid. This Moorella thermoacetica (strain ATCC 39073 / JCM 9320) protein is Transcriptional regulator MraZ.